The following is a 137-amino-acid chain: Basic phospholipase A2 homolog bothropstoxin-I (137 aa).

An N-terminal signal peptide occupies residues Met-1 to Gly-16. Disulfide bonds link Cys-42–Cys-131, Cys-44–Cys-60, Cys-59–Cys-111, Cys-65–Cys-137, Cys-66–Cys-104, Cys-73–Cys-97, and Cys-91–Cys-102. The important for membrane-damaging activities in eukaryotes and bacteria; heparin-binding stretch occupies residues Lys-121 to Lys-133.

The protein belongs to the phospholipase A2 family. Group II subfamily. K49 sub-subfamily. In terms of assembly, homodimer; non-covalently linked (probable alternative/compact dimer conformation in solution). Binds to heparin. In terms of tissue distribution, expressed by the venom gland.

It is found in the secreted. Suramin inhibits both myotoxic and muscle-paralyzing activities. Chicoric acid inhibits myotoxic activity. Zinc ions inhibits the myotoxic activity and the neuromuscular blockade. Heparin inhibits myotoxic activity. In terms of biological role, snake venom phospholipase A2 homolog that lacks enzymatic activity. Shows local myotoxic activity. Induces inflammation, since it induces edema and leukocytes infiltration. In addition, it induces NLRP3 NLRP3, ASC (PYCARD), caspase-1 (CASP1), and IL-1beta (IL1B) gene expression in the gastrocnemius muscle, showing that it is able to activate NLRP3 inflammasome. It also damages artificial and myoblast membranes by a calcium-independent mechanism, has bactericidal activity, and induces neuromuscular blockade. A model of myotoxic mechanism has been proposed: an apo Lys49-PLA2 is activated by the entrance of a hydrophobic molecule (e.g. fatty acid) at the hydrophobic channel of the protein leading to a reorientation of a monomer. This reorientation causes a transition between 'inactive' to 'active' states, causing alignment of C-terminal and membrane-docking sites (MDoS) side-by-side and putting the membrane-disruption sites (MDiS) in the same plane, exposed to solvent and in a symmetric position for both monomers. The MDoS region stabilizes the toxin on membrane by the interaction of charged residues with phospholipid head groups. Subsequently, the MDiS region destabilizes the membrane with penetration of hydrophobic residues. This insertion causes a disorganization of the membrane, allowing an uncontrolled influx of ions (i.e. calcium and sodium), and eventually triggering irreversible intracellular alterations and cell death. This chain is Basic phospholipase A2 homolog bothropstoxin-I, found in Bothrops jararacussu (Jararacussu).